Reading from the N-terminus, the 160-residue chain is Urease accessory protein UreE (160 aa).

This sequence belongs to the UreE family.

Its subcellular location is the cytoplasm. Functionally, involved in urease metallocenter assembly. Binds nickel. Probably functions as a nickel donor during metallocenter assembly. The sequence is that of Urease accessory protein UreE from Acinetobacter baumannii (strain ACICU).